We begin with the raw amino-acid sequence, 368 residues long: Peptide chain release factor 2 (368 aa).

At Gln250 the chain carries N5-methylglutamine.

It belongs to the prokaryotic/mitochondrial release factor family. Post-translationally, methylated by PrmC. Methylation increases the termination efficiency of RF2.

The protein resides in the cytoplasm. Its function is as follows. Peptide chain release factor 2 directs the termination of translation in response to the peptide chain termination codons UGA and UAA. The protein is Peptide chain release factor 2 of Chlamydia abortus (strain DSM 27085 / S26/3) (Chlamydophila abortus).